The sequence spans 196 residues: Neurensin-1 (196 aa).

2 helical membrane passes run 67 to 87 (LISG…GFLV) and 121 to 141 (AVLF…SVFA).

Belongs to the VMP family. Expressed predominantly in brain. Also weakly expressed in lung and spleen. In brain, expressed strongly in nerve fibers of the cerebral cortex, anterior cerebral nuclei, hypothalamus, amygdaloid complex, brain stem of the metaencephalon and medulla oblongata, and moderately expressed in soma of neurons of the dentate gyrus of the hippocampus and Purkinje cells of the cerebellum.

It localises to the membrane. The protein resides in the cell projection. The protein localises to the neuron projection. May play an important role in neural organelle transport, and in transduction of nerve signals or in nerve growth. May play a role in neurite extension. This Mus musculus (Mouse) protein is Neurensin-1.